We begin with the raw amino-acid sequence, 672 residues long: Spermatid perinuclear RNA-binding protein (672 aa).

The region spanning 5–363 (RSFANDDRHV…ALKRPFEDGL (359 aa)) is the DZF domain. Disordered stretches follow at residues 52–73 (TNKGTKTEGETEVKKDEAGENY) and 349–371 (GAGSSALKRPFEDGLGDDKDPNK). The segment covering 357–371 (RPFEDGLGDDKDPNK) has biased composition (basic and acidic residues). The region spanning 387-453 (DLMNALMRLN…AVKVLQAMGY (67 aa)) is the DRBM 1 domain. The span at 466 to 476 (SDEKSDNESKN) shows a compositional bias: basic and acidic residues. Residues 466-499 (SDEKSDNESKNETVSSNSSNNTGNSTTETSSTLE) form a disordered region. A compositionally biased stretch (low complexity) spans 477 to 497 (ETVSSNSSNNTGNSTTETSST). The 67-residue stretch at 510–576 (SGKNPVMELN…ALAALEKLFS (67 aa)) folds into the DRBM 2 domain. Residues R612 and R617 each carry the asymmetric dimethylarginine modification.

In terms of assembly, interacts with EIF2AK2. Associates with microtubules; it is unsure whether such interaction is direct or indirect.

It localises to the cytoplasm. Functionally, involved in spermatogenesis and sperm function. Plays a role in regulation of cell growth. Binds to double-stranded DNA and RNA. Binds most efficiently to poly(I:C) RNA than to poly(dI:dC) DNA. Binds also to single-stranded poly(G) RNA. Binds non-specifically to the mRNA PRM1 3'-UTR and adenovirus VA RNA. This chain is Spermatid perinuclear RNA-binding protein (STRBP), found in Homo sapiens (Human).